Here is a 460-residue protein sequence, read N- to C-terminus: MAPPRKGELSPEEKDLLGVIAKGNVEEAGRLLGSKNVHVNCLDEHGMTPLMHAAYKGKVDMCRLLLRHGADVNCNEHEHGYTALMFAGLSGNKEITWMMLEAGAETDVVNSVGRTAAQMAAFVGQHDCVTIINNFFPRERLDYYTKPQGLDKEPKLPVKLAGPLHKIITTTNMHPVKIVLLVKENPLLAEVEALQKCYRVLDLICEKCMKQKDMNEVLAMKMHYISCIFQKCVTFLKEREDKLDGFIKSLLKGRDKDGFPVYQEKLIRESIRKFPYCEATLLQQLVRSIAPVELGSDPTAFSVLTQAITGQVGFVDAEFCTTCGEKGADKRCSVCKVVMYCDQNCQKTHWFTHKKVCKTLKEIHEKQELEAAKEKRRQEKKQKKDEAQLEEAGATSEEQSAPGPDATKEADPNLWIQTDQTEETELTKEPEARAPRPDSPLESETALADIALQKIQDSEE.

3 ANK repeats span residues 45-74 (HGMT…DVNC), 79-108 (HGYT…ETDV), and 159-188 (KLAG…NPLL). Zn(2+) contacts are provided by Cys320, Cys323, Cys332, Cys335, Cys341, Cys345, His353, and Cys357. Residues 320 to 357 (CTTCGEKGADKRCSVCKVVMYCDQNCQKTHWFTHKKVC) form an MYND-type zinc finger. Basic and acidic residues-rich tracts occupy residues 371-387 (AAKE…KDEA) and 425-436 (ELTKEPEARAPR). A disordered region spans residues 371 to 460 (AAKEKRRQEK…ALQKIQDSEE (90 aa)).

The protein resides in the cell projection. It is found in the cilium. Its function is as follows. May be involved in the trafficking of signaling proteins to the cilia. The polypeptide is Ankyrin repeat and MYND domain-containing protein 2 (ANKMY2) (Gallus gallus (Chicken)).